The chain runs to 392 residues: Nuclear speckle splicing regulatory protein 1 homolog (392 aa).

Disordered regions lie at residues 1–73, 113–169, and 187–357; these read MASK…IFDY, RQLE…AFND, and LLND…ARLD. Basic and acidic residues-rich tracts occupy residues 54–65, 113–132, 149–160, 205–238, and 313–357; these read KAAEREHQKAEA, RQLE…REKE, KQQEEVKKHREQ, QKNV…KSIY, and KSIE…ARLD. Residues 76–132 adopt a coiled-coil conformation; sequence NYDEIQAIKNEKKEEARKADKNRESKYAENIIKAHARRQLEQFSREERQQLREREKE.

Belongs to the NSRP1 family. As to expression, expressed in the intestine, nervous system and head neurons in both larvae and adults. Expressed in the distal tip cell.

The protein resides in the cytoplasm. Its subcellular location is the nucleus. Required for the cessation of distal tip cell migration at the end of larval morphogenesis. The polypeptide is Nuclear speckle splicing regulatory protein 1 homolog (ccdc-55) (Caenorhabditis elegans).